Reading from the N-terminus, the 198-residue chain is Molybdopterin synthase catalytic subunit (198 aa).

Residues 107–108, Lys123, and 130–132 each bind substrate; these read HR and KKE.

The protein belongs to the MoaE family. MOCS2B subfamily. As to quaternary structure, heterotetramer; composed of 2 small (MOCS2A) and 2 large (MOCS2B) subunits.

It localises to the cytoplasm. It catalyses the reaction 2 [molybdopterin-synthase sulfur-carrier protein]-C-terminal-Gly-aminoethanethioate + cyclic pyranopterin phosphate + H2O = molybdopterin + 2 [molybdopterin-synthase sulfur-carrier protein]-C-terminal Gly-Gly + 2 H(+). It participates in cofactor biosynthesis; molybdopterin biosynthesis. Catalytic subunit of the molybdopterin synthase complex, a complex that catalyzes the conversion of precursor Z into molybdopterin. Acts by mediating the incorporation of 2 sulfur atoms from thiocarboxylated MOCS2A into precursor Z to generate a dithiolene group. This chain is Molybdopterin synthase catalytic subunit, found in Arabidopsis thaliana (Mouse-ear cress).